The sequence spans 142 residues: gSG7 salivary protein (142 aa).

Positions 1–25 (METKLVLALIACGVICLLQTTPTEA) are cleaved as a signal peptide. 2 disulfide bridges follow: C83–C138 and C106–C116.

Interacts with host coagulation factor XII (F12) (inactive and activated). Interacts with host high molecular weight kininogen (KNG1) (inactive and activated).

The protein localises to the secreted. Zn(2+) modulates binding to host coagulation factor XII (F12) and high molecular weight kininogen (KNG1). Its function is as follows. Salivary protein with anticoagulant activity. Inhibits activation of host kallikrein-kinin system by preventing the reciprocal activation of coagulation factor XII (F12) and prekallikrein (KLKB1), and subsequent release of bradykinin. Inhibits host factor XII and high molecular weight kininogen (KNG1) binding to negatively charged surfaces. Weakly inhibits the alternative pathway of complement system activation in the host. The protein is gSG7 salivary protein of Anopheles stephensi (Indo-Pakistan malaria mosquito).